Reading from the N-terminus, the 267-residue chain is Serine acetyltransferase (267 aa).

The protein belongs to the transferase hexapeptide repeat family.

Its subcellular location is the cytoplasm. The catalysed reaction is L-serine + acetyl-CoA = O-acetyl-L-serine + CoA. It participates in amino-acid biosynthesis; L-cysteine biosynthesis; L-cysteine from L-serine: step 1/2. This chain is Serine acetyltransferase (cysE), found in Haemophilus influenzae (strain ATCC 51907 / DSM 11121 / KW20 / Rd).